Here is a 221-residue protein sequence, read N- to C-terminus: Small ribosomal subunit protein eS1 (221 aa).

The protein belongs to the eukaryotic ribosomal protein eS1 family.

The chain is Small ribosomal subunit protein eS1 from Pyrobaculum aerophilum (strain ATCC 51768 / DSM 7523 / JCM 9630 / CIP 104966 / NBRC 100827 / IM2).